Consider the following 314-residue polypeptide: Thioredoxin reductase aclD (314 aa).

FAD is bound by residues 13 to 16, 35 to 40, His-47, and Ala-112; these read GGPA and DSKSYR. Cys-136 and Cys-139 form a disulfide bridge. Residues Asp-281 and 288-289 each bind FAD; that span reads AA.

The protein belongs to the class-II pyridine nucleotide-disulfide oxidoreductase family. In terms of assembly, homodimer. The cofactor is FAD.

It functions in the pathway mycotoxin biosynthesis. Its function is as follows. Thioredoxin reductase; part of the gene cluster that mediates the biosynthesis of aspirochlorine (or antibiotic A30641), an unusual halogenated spiro compound with distinctive antifungal properties due to selective inhibition of protein biosynthesis, and which is also active against bacteria, viruses, and murine tumor cells. The non-ribosomal peptide synthetase (NRPS) aclP is responsible the formation of the diketopiperazine (DKP) core from the condensation of 2 phenylalanine residues. One Phe residue is tailored into chlorotyrosine by hydroxylation and chlorination, whereas the second Phe undergoes an unprecedented C-C bond cleavage to be converted into glycine. After formation of the DKP, sulfur is incorporated into the DKP by conjugation with glutathione by aclG, followed by its stepwise degradation to the thiol by aclI, aclJ and aclK, and the dithiol oxidation by aclT. In addition, oxygenases (aclB, aclC, aclL and aclO) and O-methyltransferases (aclM and aclU) act as tailoring enzymes to produce the intermediate dechloroaspirochlorine. Ultimately, chlorination of dechloroaspirochlorine by the halogenase aclH is the last step in the aspirochlorine pathway. The polypeptide is Thioredoxin reductase aclD (Aspergillus oryzae (strain ATCC 42149 / RIB 40) (Yellow koji mold)).